The sequence spans 70 residues: Guanine nucleotide-binding protein G(I)/G(S)/G(O) subunit gamma-8 (70 aa).

Cys-67 is modified (cysteine methyl ester). Cys-67 carries the S-geranylgeranyl cysteine lipid modification. Positions 68–70 (VLL) are cleaved as a propeptide — removed in mature form.

The protein belongs to the G protein gamma family. In terms of assembly, g proteins are composed of 3 units, alpha, beta and gamma.

Its subcellular location is the cell membrane. Functionally, guanine nucleotide-binding proteins (G proteins) are involved as a modulator or transducer in various transmembrane signaling systems. The beta and gamma chains are required for the GTPase activity, for replacement of GDP by GTP, and for G protein-effector interaction. The polypeptide is Guanine nucleotide-binding protein G(I)/G(S)/G(O) subunit gamma-8 (GNG8) (Homo sapiens (Human)).